The primary structure comprises 1258 residues: Phosphatidylinositol 3,4,5-trisphosphate 5-phosphatase 2 (1258 aa).

An SH2 domain is found at 21–117 (WYHRDLSRAA…GLVCALLLPV (97 aa)). Residues 119–132 (GEREPDPPDDRDAS) show a composition bias toward basic and acidic residues. A disordered region spans residues 119–180 (GEREPDPPDD…AESAPNGLST (62 aa)). Residue Ser-132 is modified to Phosphoserine. Positions 145-155 (SGSTSISAPTG) are enriched in polar residues. Over residues 156–166 (PSSPLPAPETP) the composition is skewed to pro residues. At Thr-165 the chain carries Phosphothreonine. Phosphoserine is present on residues Ser-241 and Ser-352. Residue Tyr-886 is modified to Phosphotyrosine. The residue at position 890 (Ser-890) is a Phosphoserine. Positions 897–1118 (GAKSKAPSVS…FLGEVASGDD (222 aa)) are disordered. The span at 938 to 950 (PPPTGRPPAPPRA) shows a compositional bias: pro residues. Residues 944-949 (PPAPPR) carry the SH3-binding motif. A compositionally biased stretch (basic and acidic residues) spans 951-965 (APREEPLTPRLKPEG). Thr-958 is modified (phosphothreonine). The short motif at 983 to 986 (NPAY) is the NPXY motif element. Phosphotyrosine; by SRC is present on Tyr-986. Pro residues-rich tracts occupy residues 996 to 1007 (LLPPEPPSPARA), 1048 to 1059 (LPPPDFPPPPLP), and 1087 to 1104 (GPPPPKAHPRPPLPPGPS). Ser-1131 bears the Phosphoserine mark. Phosphotyrosine occurs at positions 1135 and 1162. An SAM domain is found at 1196 to 1258 (LGEAGMSAWL…LLLDTLQLSK (63 aa)). Residue Ser-1257 is modified to Phosphoserine.

It belongs to the inositol 1,4,5-trisphosphate 5-phosphatase family. In terms of assembly, interacts with tyrosine phosphorylated form of SHC1. Interacts with EGFR. Upon stimulation by the EGF signaling pathway, it forms a complex with SHC1 and EGFR. Interacts with cytoskeletal protein SORBS3/vinexin, promoting its localization to the periphery of cells. Forms a complex with filamin (FLNA or FLNB), actin, GPIb (GP1BA or GP1BB) that regulates cortical and submembraneous actin. Interacts with c-Met/MET, when c-Met/MET is phosphorylated on 'Tyr-1356'. Interacts with p130Cas/BCAR1. Interacts with CENTD3/ARAP3 via its SAM domain. Interacts with c-Cbl/CBL and CAP/SORBS1. Interacts with activated EPHA2 receptor. Interacts with receptor FCGR2A. Interacts with receptor FCGR2B. Interacts with tyrosine kinase ABL1. Interacts with tyrosine kinase TEC. Interacts with CSF1R. Interacts (via N-terminus) with SH3YL1 (via SH3 domain). Interacts with FCRL6 (tyrosine phosphorylated form). Interacts (via SH2 domain) with tyrosine phosphorylated KLRC1 (via ITIM). Interacts with NEDD9/HEF1. Tyrosine phosphorylated by the members of the SRC family after exposure to a diverse array of extracellular stimuli such as insulin, growth factors such as EGF or PDGF, chemokines, integrin ligands and hypertonic and oxidative stress. May be phosphorylated upon IgG receptor FCGR2B-binding. Phosphorylated at Tyr-986 following cell attachment and spreading. Phosphorylated at Tyr-1162 following EGF signaling pathway stimulation. Phosphorylated at Thr-958 in response to PDGF. As to expression, widely expressed, most prominently in skeletal muscle, heart and brain. Present in platelets. Expressed in transformed myeloid cells and in primary macrophages, but not in peripheral blood monocytes.

The protein resides in the cytoplasm. It is found in the cytosol. It localises to the cytoskeleton. The protein localises to the membrane. Its subcellular location is the cell projection. The protein resides in the filopodium. It is found in the lamellipodium. It localises to the basal cell membrane. The protein localises to the nucleus. Its subcellular location is the nucleus speckle. The protein resides in the spindle pole. The catalysed reaction is a 1,2-diacyl-sn-glycero-3-phospho-(1D-myo-inositol-3,4,5-trisphosphate) + H2O = a 1,2-diacyl-sn-glycero-3-phospho-(1D-myo-inositol-3,4-bisphosphate) + phosphate. It catalyses the reaction 1,2-dioctanoyl-sn-glycero-3-phospho-(1D-myo-inositol-3,4,5-trisphosphate) + H2O = 1,2-dioctanoyl-sn-glycero-3-phospho-(1D-myo-inositol-3,4-bisphosphate) + phosphate. It carries out the reaction 1,2-dihexadecanoyl-sn-glycero-3-phospho-(1D-myo-inositol-3,4,5-trisphosphate) + H2O = 1,2-dihexadecanoyl-sn-glycero-3-phospho-(1D-myo-inositol-3,4-bisphosphate) + phosphate. Activated upon translocation to the sites of synthesis of PtdIns(3,4,5)P3 in the membrane. Enzymatic activity is enhanced in the presence of phosphatidylserine. Functionally, phosphatidylinositol (PtdIns) phosphatase that specifically hydrolyzes the 5-phosphate of phosphatidylinositol-3,4,5-trisphosphate (PtdIns(3,4,5)P3) to produce PtdIns(3,4)P2, thereby negatively regulating the PI3K (phosphoinositide 3-kinase) pathways. Required for correct mitotic spindle orientation and therefore progression of mitosis. Plays a central role in regulation of PI3K-dependent insulin signaling, although the precise molecular mechanisms and signaling pathways remain unclear. While overexpression reduces both insulin-stimulated MAP kinase and Akt activation, its absence does not affect insulin signaling or GLUT4 trafficking. Confers resistance to dietary obesity. May act by regulating AKT2, but not AKT1, phosphorylation at the plasma membrane. Part of a signaling pathway that regulates actin cytoskeleton remodeling. Required for the maintenance and dynamic remodeling of actin structures as well as in endocytosis, having a major impact on ligand-induced EGFR internalization and degradation. Participates in regulation of cortical and submembraneous actin by hydrolyzing PtdIns(3,4,5)P3 thereby regulating membrane ruffling. Regulates cell adhesion and cell spreading. Required for HGF-mediated lamellipodium formation, cell scattering and spreading. Acts as a negative regulator of EPHA2 receptor endocytosis by inhibiting via PI3K-dependent Rac1 activation. Acts as a regulator of neuritogenesis by regulating PtdIns(3,4,5)P3 level and is required to form an initial protrusive pattern, and later, maintain proper neurite outgrowth. Acts as a negative regulator of the FC-gamma-RIIA receptor (FCGR2A). Mediates signaling from the FC-gamma-RIIB receptor (FCGR2B), playing a central role in terminating signal transduction from activating immune/hematopoietic cell receptor systems. Involved in EGF signaling pathway. Upon stimulation by EGF, it is recruited by EGFR and dephosphorylates PtdIns(3,4,5)P3. Plays a negative role in regulating the PI3K-PKB pathway, possibly by inhibiting PKB activity. Down-regulates Fc-gamma-R-mediated phagocytosis in macrophages independently of INPP5D/SHIP1. In macrophages, down-regulates NF-kappa-B-dependent gene transcription by regulating macrophage colony-stimulating factor (M-CSF)-induced signaling. Plays a role in the localization of AURKA and NEDD9/HEF1 to the basolateral membrane at interphase in polarized cysts, thereby mediates cell cycle homeostasis, cell polarization and cilia assembly. Additionally promotion of cilia growth is also facilitated by hydrolysis of (PtdIns(3,4,5)P3) to PtdIns(3,4)P2. Promotes formation of apical membrane-initiation sites during the initial stages of lumen formation via Rho family-induced actin filament organization and CTNNB1 localization to cell-cell contacts. May also hydrolyze PtdIns(1,3,4,5)P4, and could thus affect the levels of the higher inositol polyphosphates like InsP6. Involved in endochondral ossification. The polypeptide is Phosphatidylinositol 3,4,5-trisphosphate 5-phosphatase 2 (Homo sapiens (Human)).